Consider the following 555-residue polypeptide: Glucose-6-phosphate isomerase (555 aa).

Glutamate 365 acts as the Proton donor in catalysis. Active-site residues include histidine 396 and lysine 522.

The protein belongs to the GPI family.

Its subcellular location is the cytoplasm. It carries out the reaction alpha-D-glucose 6-phosphate = beta-D-fructose 6-phosphate. It participates in carbohydrate biosynthesis; gluconeogenesis. The protein operates within carbohydrate degradation; glycolysis; D-glyceraldehyde 3-phosphate and glycerone phosphate from D-glucose: step 2/4. Catalyzes the reversible isomerization of glucose-6-phosphate to fructose-6-phosphate. The polypeptide is Glucose-6-phosphate isomerase (Psychrobacter arcticus (strain DSM 17307 / VKM B-2377 / 273-4)).